The sequence spans 119 residues: Small ribosomal subunit protein uS17 (119 aa).

Positions 1–21 (MAEAKTGAKATKSAAAGAADG) are enriched in low complexity. The disordered stretch occupies residues 1-44 (MAEAKTGAKATKSAAAGAADGASKEKGPKHTPSTPKPRGRRKTR).

It belongs to the universal ribosomal protein uS17 family. As to quaternary structure, part of the 30S ribosomal subunit.

Its function is as follows. One of the primary rRNA binding proteins, it binds specifically to the 5'-end of 16S ribosomal RNA. The chain is Small ribosomal subunit protein uS17 from Mycobacterium marinum (strain ATCC BAA-535 / M).